A 542-amino-acid chain; its full sequence is Chaperonin GroEL (542 aa).

ATP contacts are provided by residues 29 to 32 (TIGP), 86 to 90 (DGTTT), Gly-413, 477 to 479 (NAA), and Asp-493.

The protein belongs to the chaperonin (HSP60) family. In terms of assembly, forms a cylinder of 14 subunits composed of two heptameric rings stacked back-to-back. Interacts with the co-chaperonin GroES.

The protein localises to the cytoplasm. The catalysed reaction is ATP + H2O + a folded polypeptide = ADP + phosphate + an unfolded polypeptide.. In terms of biological role, together with its co-chaperonin GroES, plays an essential role in assisting protein folding. The GroEL-GroES system forms a nano-cage that allows encapsulation of the non-native substrate proteins and provides a physical environment optimized to promote and accelerate protein folding. In Lactobacillus acidophilus (strain ATCC 700396 / NCK56 / N2 / NCFM), this protein is Chaperonin GroEL.